We begin with the raw amino-acid sequence, 255 residues long: MNITAVIPARFASVRFPGKALAIIDGKPMIQHVYERTARASLVDSVIIATDDERIQQAVSVFGGVCRMTRNDHETGTDRLAEVAGTLSADIIVNVQGDEPLIAPEMIDQAIRPLLDDPSLRMATLKSRIRCLHDFLSPNVVKVVTDRDGNALYFSRSPLPFFRDKWQDLKDESFASGKLLCYKHVGLYVYRRDFLVEFAAMAPTFLETSEKLEQLRALENGARIRVVETEFESIGVDTPDDLVKARERFRAIQSK.

This sequence belongs to the KdsB family.

It is found in the cytoplasm. The enzyme catalyses 3-deoxy-alpha-D-manno-oct-2-ulosonate + CTP = CMP-3-deoxy-beta-D-manno-octulosonate + diphosphate. It participates in nucleotide-sugar biosynthesis; CMP-3-deoxy-D-manno-octulosonate biosynthesis; CMP-3-deoxy-D-manno-octulosonate from 3-deoxy-D-manno-octulosonate and CTP: step 1/1. It functions in the pathway bacterial outer membrane biogenesis; lipopolysaccharide biosynthesis. Activates KDO (a required 8-carbon sugar) for incorporation into bacterial lipopolysaccharide in Gram-negative bacteria. The sequence is that of 3-deoxy-manno-octulosonate cytidylyltransferase from Pelobacter propionicus (strain DSM 2379 / NBRC 103807 / OttBd1).